We begin with the raw amino-acid sequence, 122 residues long: Large ribosomal subunit protein uL14 (122 aa).

This sequence belongs to the universal ribosomal protein uL14 family. In terms of assembly, part of the 50S ribosomal subunit. Forms a cluster with proteins L3 and L19. In the 70S ribosome, L14 and L19 interact and together make contacts with the 16S rRNA in bridges B5 and B8.

Functionally, binds to 23S rRNA. Forms part of two intersubunit bridges in the 70S ribosome. This is Large ribosomal subunit protein uL14 from Shewanella denitrificans (strain OS217 / ATCC BAA-1090 / DSM 15013).